A 357-amino-acid polypeptide reads, in one-letter code: ATP-dependent 6-phosphofructokinase (357 aa).

ATP contacts are provided by residues Gly-12, 80 to 81 (KG), and 107 to 110 (GDGS). Asp-108 contacts Mg(2+). Residues 131–133 (TID), Arg-168, 175–177 (MGR), Glu-229, Arg-272, and 278–281 (HIQR) each bind substrate. Asp-133 acts as the Proton acceptor in catalysis.

This sequence belongs to the phosphofructokinase type A (PFKA) family. Mixed-substrate PFK group III subfamily. In terms of assembly, homodimer or homotetramer. Mg(2+) is required as a cofactor.

The protein localises to the cytoplasm. It catalyses the reaction beta-D-fructose 6-phosphate + ATP = beta-D-fructose 1,6-bisphosphate + ADP + H(+). It participates in carbohydrate degradation; glycolysis; D-glyceraldehyde 3-phosphate and glycerone phosphate from D-glucose: step 3/4. Its activity is regulated as follows. Subject to allosteric activation by ADP and other diphosphonucleosides, and inhibition by phosphoenolpyruvate. Catalyzes the phosphorylation of D-fructose 6-phosphate to fructose 1,6-bisphosphate by ATP, the first committing step of glycolysis. The sequence is that of ATP-dependent 6-phosphofructokinase from Trichormus variabilis (strain ATCC 29413 / PCC 7937) (Anabaena variabilis).